Reading from the N-terminus, the 316-residue chain is N-acetyl-gamma-glutamyl-phosphate reductase (316 aa).

Cys-136 is an active-site residue.

Belongs to the NAGSA dehydrogenase family. Type 1 subfamily.

The protein resides in the cytoplasm. The catalysed reaction is N-acetyl-L-glutamate 5-semialdehyde + phosphate + NADP(+) = N-acetyl-L-glutamyl 5-phosphate + NADPH + H(+). The protein operates within amino-acid biosynthesis; L-arginine biosynthesis; N(2)-acetyl-L-ornithine from L-glutamate: step 3/4. Functionally, catalyzes the NADPH-dependent reduction of N-acetyl-5-glutamyl phosphate to yield N-acetyl-L-glutamate 5-semialdehyde. The polypeptide is N-acetyl-gamma-glutamyl-phosphate reductase (Xanthomonas campestris pv. campestris (strain 8004)).